The sequence spans 368 residues: 1-deoxy-D-xylulose 5-phosphate reductoisomerase (368 aa).

Positions 7, 8, 9, 10, 31, 32, 33, and 113 each coordinate NADPH. K114 serves as a coordination point for 1-deoxy-D-xylulose 5-phosphate. E115 lines the NADPH pocket. Residue D133 participates in Mn(2+) binding. The 1-deoxy-D-xylulose 5-phosphate site is built by S134, E135, S158, and H181. Residue E135 coordinates Mn(2+). G187 lines the NADPH pocket. 1-deoxy-D-xylulose 5-phosphate-binding residues include S194, N199, K200, and E203. Position 203 (E203) interacts with Mn(2+).

This sequence belongs to the DXR family. Mg(2+) serves as cofactor. The cofactor is Mn(2+).

The enzyme catalyses 2-C-methyl-D-erythritol 4-phosphate + NADP(+) = 1-deoxy-D-xylulose 5-phosphate + NADPH + H(+). The protein operates within isoprenoid biosynthesis; isopentenyl diphosphate biosynthesis via DXP pathway; isopentenyl diphosphate from 1-deoxy-D-xylulose 5-phosphate: step 1/6. Catalyzes the NADPH-dependent rearrangement and reduction of 1-deoxy-D-xylulose-5-phosphate (DXP) to 2-C-methyl-D-erythritol 4-phosphate (MEP). This chain is 1-deoxy-D-xylulose 5-phosphate reductoisomerase, found in Helicobacter pylori (strain Shi470).